The chain runs to 209 residues: Kynurenine formamidase (209 aa).

Position 20 (Trp20) interacts with substrate. The Zn(2+) site is built by His50, His54, and Asp56. His60 acts as the Proton donor/acceptor in catalysis. Residues His161 and Glu173 each contribute to the Zn(2+) site.

It belongs to the Cyclase 1 superfamily. KynB family. In terms of assembly, homodimer. The cofactor is Zn(2+).

The enzyme catalyses N-formyl-L-kynurenine + H2O = L-kynurenine + formate + H(+). Its pathway is amino-acid degradation; L-tryptophan degradation via kynurenine pathway; L-kynurenine from L-tryptophan: step 2/2. Catalyzes the hydrolysis of N-formyl-L-kynurenine to L-kynurenine, the second step in the kynurenine pathway of tryptophan degradation. The sequence is that of Kynurenine formamidase from Bacillus cytotoxicus (strain DSM 22905 / CIP 110041 / 391-98 / NVH 391-98).